The following is a 1090-amino-acid chain: Nitrogen assimilation transcription factor nit-4 (1090 aa).

Residues 1 to 14 (MNSSDVQMMSSQDA) show a composition bias toward polar residues. The segment at 1-43 (MNSSDVQMMSSQDAPGSAGLAPDNIASSLPSKKKSRRGADPTN) is disordered. Residues 53-81 (CIACRRRKSKCDGALPSCAACASVYGTEC) constitute a DNA-binding region (zn(2)-C6 fungal-type). Disordered stretches follow at residues 145-176 (RRDE…SQAV), 666-689 (FSTS…PAPP), 773-798 (HQHH…YQQQ), 825-875 (GIPT…VKPP), 936-999 (QGWD…QRQQ), and 1033-1053 (HGAE…TTVG). The span at 167 to 176 (GRDDATSQAV) shows a compositional bias: basic and acidic residues. Over residues 666–677 (FSTSEVPSPNRT) the composition is skewed to polar residues. Over residues 849-859 (QPQQQQQPQAQ) the composition is skewed to low complexity. 2 stretches are compositionally biased toward gly residues: residues 940–965 (LEGG…GGAG) and 976–988 (NIGG…GGST). The span at 990 to 999 (QRQQQQQRQQ) shows a compositional bias: low complexity.

Its subcellular location is the nucleus. Its function is as follows. Pathway-specific regulatory gene of nitrate assimilation; it activates the transcription of the genes for nitrate and nitrite reductases. This Neurospora crassa (strain ATCC 24698 / 74-OR23-1A / CBS 708.71 / DSM 1257 / FGSC 987) protein is Nitrogen assimilation transcription factor nit-4 (nit-4).